Consider the following 230-residue polypeptide: Large ribosomal subunit protein uL1 (230 aa).

Belongs to the universal ribosomal protein uL1 family. As to quaternary structure, part of the 50S ribosomal subunit.

Binds directly to 23S rRNA. The L1 stalk is quite mobile in the ribosome, and is involved in E site tRNA release. Its function is as follows. Protein L1 is also a translational repressor protein, it controls the translation of the L11 operon by binding to its mRNA. The sequence is that of Large ribosomal subunit protein uL1 from Nitrosomonas europaea (strain ATCC 19718 / CIP 103999 / KCTC 2705 / NBRC 14298).